Consider the following 62-residue polypeptide: Large ribosomal subunit protein bL32 (62 aa).

Basic residues predominate over residues Met-1–Ser-19. Residues Met-1–Ser-20 are disordered.

The protein belongs to the bacterial ribosomal protein bL32 family.

This chain is Large ribosomal subunit protein bL32, found in Finegoldia magna (strain ATCC 29328 / DSM 20472 / WAL 2508) (Peptostreptococcus magnus).